The following is a 401-amino-acid chain: Imidazolonepropionase (401 aa).

Fe(3+) is bound by residues His-70 and His-72. 2 residues coordinate Zn(2+): His-70 and His-72. 3 residues coordinate 4-imidazolone-5-propanoate: Arg-79, Tyr-142, and His-175. N-formimidoyl-L-glutamate is bound at residue Tyr-142. Residue His-240 participates in Fe(3+) binding. Residue His-240 coordinates Zn(2+). Position 243 (Gln-243) interacts with 4-imidazolone-5-propanoate. Asp-315 lines the Fe(3+) pocket. Asp-315 contributes to the Zn(2+) binding site. Positions 317 and 319 each coordinate N-formimidoyl-L-glutamate. Position 320 (Thr-320) interacts with 4-imidazolone-5-propanoate.

Belongs to the metallo-dependent hydrolases superfamily. HutI family. Requires Zn(2+) as cofactor. Fe(3+) is required as a cofactor.

Its subcellular location is the cytoplasm. It carries out the reaction 4-imidazolone-5-propanoate + H2O = N-formimidoyl-L-glutamate. It participates in amino-acid degradation; L-histidine degradation into L-glutamate; N-formimidoyl-L-glutamate from L-histidine: step 3/3. In terms of biological role, catalyzes the hydrolytic cleavage of the carbon-nitrogen bond in imidazolone-5-propanoate to yield N-formimidoyl-L-glutamate. It is the third step in the universal histidine degradation pathway. The chain is Imidazolonepropionase from Caulobacter sp. (strain K31).